The primary structure comprises 816 residues: Leucine--tRNA ligase (816 aa).

The 'HIGH' region signature appears at 40 to 51; the sequence is SYPSGSQLHAGH. Residues 576 to 580 carry the 'KMSKS' region motif; it reads KMSKS. Residue K579 participates in ATP binding.

This sequence belongs to the class-I aminoacyl-tRNA synthetase family.

The protein resides in the cytoplasm. It carries out the reaction tRNA(Leu) + L-leucine + ATP = L-leucyl-tRNA(Leu) + AMP + diphosphate. This is Leucine--tRNA ligase from Clostridium perfringens (strain ATCC 13124 / DSM 756 / JCM 1290 / NCIMB 6125 / NCTC 8237 / Type A).